The chain runs to 119 residues: Large ribosomal subunit protein uL18 (119 aa).

Residues 1 to 20 (MISKPDKNKTRQKRHTRVRG) form a disordered region. The span at 10-20 (TRQKRHTRVRG) shows a compositional bias: basic residues.

This sequence belongs to the universal ribosomal protein uL18 family. Part of the 50S ribosomal subunit; part of the 5S rRNA/L5/L18/L25 subcomplex. Contacts the 5S and 23S rRNAs.

Its function is as follows. This is one of the proteins that bind and probably mediate the attachment of the 5S RNA into the large ribosomal subunit, where it forms part of the central protuberance. In Latilactobacillus sakei subsp. sakei (strain 23K) (Lactobacillus sakei subsp. sakei), this protein is Large ribosomal subunit protein uL18.